Here is a 101-residue protein sequence, read N- to C-terminus: Urease subunit beta (101 aa).

This sequence belongs to the urease beta subunit family. As to quaternary structure, heterotrimer of UreA (gamma), UreB (beta) and UreC (alpha) subunits. Three heterotrimers associate to form the active enzyme.

It localises to the cytoplasm. The catalysed reaction is urea + 2 H2O + H(+) = hydrogencarbonate + 2 NH4(+). It participates in nitrogen metabolism; urea degradation; CO(2) and NH(3) from urea (urease route): step 1/1. In Rhizobium johnstonii (strain DSM 114642 / LMG 32736 / 3841) (Rhizobium leguminosarum bv. viciae), this protein is Urease subunit beta.